A 303-amino-acid chain; its full sequence is Protein-lysine N-methyltransferase rrg1 (303 aa).

S-adenosyl-L-methionine contacts are provided by residues W117, 143 to 145 (GAG), D165, W198, and S221.

Belongs to the class I-like SAM-binding methyltransferase superfamily. METTL21 family.

It localises to the cytoplasm. The protein resides in the nucleus. Functionally, S-adenosyl-L-methionine-dependent protein-lysine N-methyltransferase that methylates elongation factor 2 and elongation factor 3A. In Schizosaccharomyces pombe (strain 972 / ATCC 24843) (Fission yeast), this protein is Protein-lysine N-methyltransferase rrg1.